The sequence spans 380 residues: Gibberellin 20 oxidase 3 (380 aa).

The region spanning 221-321 is the Fe2OG dioxygenase domain; that stretch reads DSDSIFRLNY…RKTFAFFLCP (101 aa). His-246, Asp-248, and His-302 together coordinate Fe cation. Arg-312 is a catalytic residue.

The protein belongs to the iron/ascorbate-dependent oxidoreductase family. GA20OX subfamily. It depends on Fe(2+) as a cofactor. L-ascorbate serves as cofactor. In terms of tissue distribution, expressed at high level in developing siliques. Detected in seeds, roots, leaves and inflorescences. In seeds, specifically detected at the outer layer of the outer integument.

It catalyses the reaction gibberellin A12 + 2 2-oxoglutarate + 3 O2 + H(+) = gibberellin A9 + 2 succinate + 3 CO2 + 2 H2O. The catalysed reaction is gibberellin A12 + 3 2-oxoglutarate + 3 O2 = gibberellin A25 + 3 succinate + 3 CO2 + H2O + H(+). The enzyme catalyses gibberellin A53 + 2 2-oxoglutarate + 3 O2 + H(+) = gibberellin A20 + 2 succinate + 3 CO2 + 2 H2O. Its pathway is plant hormone biosynthesis; gibberellin biosynthesis. Its function is as follows. Key oxidase enzyme in the biosynthesis of gibberellin that catalyzes the conversion of GA12 and GA53 to GA9 and GA20 respectively, via a three-step oxidation at C-20 of the GA skeleton, and GA25 is also formed as a minor product. GA53 is less effectively oxidized than GA12. The polypeptide is Gibberellin 20 oxidase 3 (GA20OX3) (Arabidopsis thaliana (Mouse-ear cress)).